Reading from the N-terminus, the 859-residue chain is Protein FAM171A1 (859 aa).

Positions 1 to 20 are cleaved as a signal peptide; that stretch reads MSGSTAVALLFCVLSCSVWG. Residues 21–307 lie on the Extracellular side of the membrane; it reads AGSKASHEHN…VTQDITSYHT (287 aa). Asn-163, Asn-194, and Asn-198 each carry an N-linked (GlcNAc...) asparagine glycan. A helical transmembrane segment spans residues 308–328; that stretch reads IFLLAILGGIAFILLVLLCIL. Over 329–859 the chain is Cytoplasmic; the sequence is LYYCRRKCLK…ERPLLAFNKK (531 aa). Disordered regions lie at residues 397–421, 484–509, and 771–859; these read SRDFGSREELLSHQEEKSRMSLDNL, TNHVTAGSKPNIQEQMHPVPSAPEPE, and QSPS…FNKK. Over residues 400-416 the composition is skewed to basic and acidic residues; that stretch reads FGSREELLSHQEEKSRM. Polar residues-rich tracts occupy residues 484–497 and 797–806; these read TNHVTAGSKPNIQE and SGSQTPSLQE. The span at 838-852 shows a compositional bias: basic and acidic residues; that stretch reads GENKKSPWQKREERP.

This sequence belongs to the FAM171 family.

The protein resides in the cell membrane. Functionally, may be involved in the regulation of the cytoskeletal dynamics, plays a role in actin stress fiber formation. The polypeptide is Protein FAM171A1 (fam171a1) (Xenopus laevis (African clawed frog)).